We begin with the raw amino-acid sequence, 433 residues long: C2H2 type master regulator of conidiophore development brlA (433 aa).

2 disordered regions span residues 23–54 and 238–268; these read PSEC…SMAS and TFKS…RMSG. Positions 30–48 are enriched in low complexity; the sequence is TSSFSPLDSPTPTPTSLYS. A compositionally biased stretch (polar residues) spans 238 to 264; it reads TFKSHTPSTPHRSVSMGTPSGSDTPVS. 2 consecutive C2H2-type zinc fingers follow at residues 321-345 and 351-376; these read FKCK…MKSH and HVCW…TKTH. Residues 391 to 423 form a disordered region; that stretch reads ETSQDFDPDFRGQLTPDGRPIYGSKLEDSMPDC.

The protein localises to the nucleus. BrlA, abaA and wetA are pivotal regulators of conidiophore development and conidium maturation. They act individually and together to regulate their own expression and that of numerous other sporulation-specific genes. Binds promoters of target genes at brlA response elements (BREs) containing the conserved sequence 5'-(C/A)(A/G)AGGG(G/A)-3'. The chain is C2H2 type master regulator of conidiophore development brlA from Penicillium camemberti (strain FM 013).